Here is a 266-residue protein sequence, read N- to C-terminus: Undecaprenyl-diphosphatase (266 aa).

A run of 7 helical transmembrane segments spans residues S38–W58, L80–F100, P108–A128, I136–G156, A176–Y196, I217–I237, and F245–I265.

This sequence belongs to the UppP family.

Its subcellular location is the cell inner membrane. It carries out the reaction di-trans,octa-cis-undecaprenyl diphosphate + H2O = di-trans,octa-cis-undecaprenyl phosphate + phosphate + H(+). Its function is as follows. Catalyzes the dephosphorylation of undecaprenyl diphosphate (UPP). Confers resistance to bacitracin. In Rhizobium leguminosarum bv. trifolii (strain WSM2304), this protein is Undecaprenyl-diphosphatase.